The following is a 95-amino-acid chain: Large ribosomal subunit protein bL28 (95 aa).

The disordered stretch occupies residues 1-22; sequence MSRRCELTGKGPMTGNNVSHAN.

Belongs to the bacterial ribosomal protein bL28 family.

The protein is Large ribosomal subunit protein bL28 of Ruegeria pomeroyi (strain ATCC 700808 / DSM 15171 / DSS-3) (Silicibacter pomeroyi).